A 599-amino-acid polypeptide reads, in one-letter code: MKNIRNFSIIAHIDHGKSTLSDRIIQICGGLSDREMEAQVLDSMDLERERGITIKAQSVTLDYKASDGETYQLNFIDTPGHVDFSYEVSRSLAACEGALLVVDAGQGVEAQTLANCYTAIEMDLEVVPVLNKIDLPAADPERVAEEIEDIVGIDATDAVRCSAKTGVGVQDVLERLVRDIPPPEGDPDAPLQALIIDSWFDNYLGVVSLIRVKNGTLRKGDKVKVMSTGQTYNADRLGIFTPKQIDRTELKCGEVGWLVCAIKDILGAPVGDTLTLARNPAEKALPGFKKVKPQVYAGLFPVSSDDYESFRDALGKLSLNDASLFYEPESSTALGFGFRCGFLGLLHMEIIQERLEREYDLDLITTAPTVVYEVQMTNNEVVYVDSPSKLPPLNNIQELREPIAECHMLLPQEYLGNVITLCVEKRGVQTNMVYHGNQVALTYEIPMAEVVLDFFDRLKSTSRGYASLDYNFKRFQASNMVRVDVLINGERVDALALITHNDNAPYRGRELVEKMKDLIPRQQFDIAIQAAIGNHIIARSTVKQLRKNVLAKCYGGDVSRKKKLLQKQKEGKKRMKQVGNVELPQEAFLAILHVGKDGK.

In terms of domain architecture, tr-type G spans 2–184 (KNIRNFSIIA…RLVRDIPPPE (183 aa)). Residues 14-19 (DHGKST) and 131-134 (NKID) contribute to the GTP site.

This sequence belongs to the TRAFAC class translation factor GTPase superfamily. Classic translation factor GTPase family. LepA subfamily.

It localises to the cell inner membrane. It carries out the reaction GTP + H2O = GDP + phosphate + H(+). In terms of biological role, required for accurate and efficient protein synthesis under certain stress conditions. May act as a fidelity factor of the translation reaction, by catalyzing a one-codon backward translocation of tRNAs on improperly translocated ribosomes. Back-translocation proceeds from a post-translocation (POST) complex to a pre-translocation (PRE) complex, thus giving elongation factor G a second chance to translocate the tRNAs correctly. Binds to ribosomes in a GTP-dependent manner. The sequence is that of Elongation factor 4 from Cronobacter sakazakii (strain ATCC BAA-894) (Enterobacter sakazakii).